A 309-amino-acid chain; its full sequence is Olfactory receptor 1L8 (309 aa).

Residues 1–26 lie on the Extracellular side of the membrane; sequence MERINHTSSVSEFILLGLSSRPEDQK. Asn-5 carries an N-linked (GlcNAc...) asparagine glycan. A helical membrane pass occupies residues 27 to 50; the sequence is TLFVLFLIVYLVTITGNLLIILAI. Residues 51 to 58 are Cytoplasmic-facing; sequence RFNPHLQT. A helical membrane pass occupies residues 59-80; the sequence is PMYFFLSFLSLTDICFTTSVVP. Residues 81 to 101 are Extracellular-facing; the sequence is KMLMNFLSEKKTISYAGCLTQ. Cys-98 and Cys-190 are disulfide-bonded. The chain crosses the membrane as a helical span at residues 102 to 121; sequence MYFLYALGNSDSCLLAVMAF. Over 122-140 the chain is Cytoplasmic; it reads DRYVAVCDPFHYVTTMSHH. The chain crosses the membrane as a helical span at residues 141–159; sequence HCVLLVAFSCSFPHLHSLL. Residues 160–197 are Extracellular-facing; that stretch reads HTLLLNRLTFCDSNVIHHFLCDLSPVLKLSCSSIFVNE. Residues 198-220 form a helical membrane-spanning segment; sequence IVQMTEAPIVLVTRFLCIAFSYI. The Cytoplasmic portion of the chain corresponds to 221–237; that stretch reads RILTTVLKIPSTSGKRK. Residues 238–260 traverse the membrane as a helical segment; that stretch reads AFSTCGFYLTVVTLFYGSIFCVY. The Extracellular portion of the chain corresponds to 261–272; sequence LQPPSTYAVKDH. Residues 273-292 traverse the membrane as a helical segment; sequence VATIVYTVLSSMLNPFIYSL. Topologically, residues 293–309 are cytoplasmic; that stretch reads RNKDLKQGLRKLMSKRS.

It belongs to the G-protein coupled receptor 1 family.

It localises to the cell membrane. In terms of biological role, odorant receptor. In Homo sapiens (Human), this protein is Olfactory receptor 1L8 (OR1L8).